Consider the following 473-residue polypeptide: Sulfate adenylyltransferase subunit 1 (473 aa).

Residues 19–238 (KTLLKFLTCG…IKIKNSISSE (220 aa)) form the tr-type G domain. Residues 28 to 35 (GSVDDGKS) are G1. A GTP-binding site is contributed by 28–35 (GSVDDGKS). Residues 86–90 (GITID) are G2. The interval 107–110 (DTPG) is G3. Residues 107–111 (DTPGH) and 162–165 (NKMD) each bind GTP. Residues 162–165 (NKMD) are G4. Residues 200 to 202 (SAL) are G5.

This sequence belongs to the TRAFAC class translation factor GTPase superfamily. Classic translation factor GTPase family. CysN/NodQ subfamily. In terms of assembly, heterodimer composed of CysD, the smaller subunit, and CysN.

The enzyme catalyses sulfate + ATP + H(+) = adenosine 5'-phosphosulfate + diphosphate. It participates in sulfur metabolism; hydrogen sulfide biosynthesis; sulfite from sulfate: step 1/3. Functionally, with CysD forms the ATP sulfurylase (ATPS) that catalyzes the adenylation of sulfate producing adenosine 5'-phosphosulfate (APS) and diphosphate, the first enzymatic step in sulfur assimilation pathway. APS synthesis involves the formation of a high-energy phosphoric-sulfuric acid anhydride bond driven by GTP hydrolysis by CysN coupled to ATP hydrolysis by CysD. The polypeptide is Sulfate adenylyltransferase subunit 1 (Buchnera aphidicola subsp. Acyrthosiphon pisum (strain APS) (Acyrthosiphon pisum symbiotic bacterium)).